Consider the following 332-residue polypeptide: Ribose-phosphate pyrophosphokinase (332 aa).

An ATP-binding site is contributed by 55–57; sequence DGE. 2 residues coordinate Mg(2+): His148 and Asp187. Lys211 is a catalytic residue. Residues Arg213, Asp237, and 241–245 each bind D-ribose 5-phosphate; that span reads DTGGT.

Belongs to the ribose-phosphate pyrophosphokinase family. Class I subfamily. In terms of assembly, homohexamer. Mg(2+) serves as cofactor.

The protein resides in the cytoplasm. The catalysed reaction is D-ribose 5-phosphate + ATP = 5-phospho-alpha-D-ribose 1-diphosphate + AMP + H(+). Its pathway is metabolic intermediate biosynthesis; 5-phospho-alpha-D-ribose 1-diphosphate biosynthesis; 5-phospho-alpha-D-ribose 1-diphosphate from D-ribose 5-phosphate (route I): step 1/1. Involved in the biosynthesis of the central metabolite phospho-alpha-D-ribosyl-1-pyrophosphate (PRPP) via the transfer of pyrophosphoryl group from ATP to 1-hydroxyl of ribose-5-phosphate (Rib-5-P). This is Ribose-phosphate pyrophosphokinase from Prochlorococcus marinus (strain MIT 9313).